Here is a 493-residue protein sequence, read N- to C-terminus: Xylulose kinase (493 aa).

A substrate-binding site is contributed by 84 to 85 (QH). Residue aspartate 247 is the Proton acceptor of the active site.

Belongs to the FGGY kinase family.

The catalysed reaction is D-xylulose + ATP = D-xylulose 5-phosphate + ADP + H(+). Catalyzes the phosphorylation of D-xylulose to D-xylulose 5-phosphate. The chain is Xylulose kinase from Haemophilus influenzae (strain ATCC 51907 / DSM 11121 / KW20 / Rd).